Consider the following 129-residue polypeptide: NADH-quinone oxidoreductase subunit K 2 (129 aa).

A run of 3 helical transmembrane segments spans residues 3–23 (LAYP…GVLA), 28–48 (ILVL…LVAF), and 68–88 (LFTI…VLAV). The segment at 98–129 (DKLRDTAEGPEPDGPGTDGSAPTAAEKAEATA) is disordered. Positions 111–122 (GPGTDGSAPTAA) are enriched in low complexity.

Belongs to the complex I subunit 4L family. In terms of assembly, NDH-1 is composed of 14 different subunits. Subunits NuoA, H, J, K, L, M, N constitute the membrane sector of the complex.

The protein localises to the cell membrane. It carries out the reaction a quinone + NADH + 5 H(+)(in) = a quinol + NAD(+) + 4 H(+)(out). Its function is as follows. NDH-1 shuttles electrons from NADH, via FMN and iron-sulfur (Fe-S) centers, to quinones in the respiratory chain. The immediate electron acceptor for the enzyme in this species is believed to be a menaquinone. Couples the redox reaction to proton translocation (for every two electrons transferred, four hydrogen ions are translocated across the cytoplasmic membrane), and thus conserves the redox energy in a proton gradient. This chain is NADH-quinone oxidoreductase subunit K 2, found in Streptomyces avermitilis (strain ATCC 31267 / DSM 46492 / JCM 5070 / NBRC 14893 / NCIMB 12804 / NRRL 8165 / MA-4680).